Consider the following 764-residue polypeptide: DNA-binding protein SATB1 (764 aa).

The span at 1-15 shows a compositional bias: basic and acidic residues; that stretch reads MDHLNEATQGKEHSE. The segment at 1-56 is disordered; the sequence is MDHLNEATQGKEHSEMSNNVSDPKGPPAKIARLEQNGSPLGRGRLGSTGGKMQGVP. Positions 20–40 match the Nuclear localization signal motif; sequence VSDPKGPPAKIARLEQNGSPL. Residues 43-52 show a composition bias toward gly residues; that stretch reads GRLGSTGGKM. Lysine 51 is covalently cross-linked (Glycyl lysine isopeptide (Lys-Gly) (interchain with G-Cter in SUMO2)). In terms of domain architecture, CMP spans 71 to 172; that stretch reads GTMLPVFCVV…VVTLKIQLHS (102 aa). N6-acetyllysine is present on lysine 136. The Protein interaction motif lies at 139–143; it reads PVPLS. The region spanning 175-248 is the CUTL domain; sequence KLEDLPPEQW…WYKHFKKTKD (74 aa). Serine 185 bears the Phosphoserine mark. Residues 224–278 form a nuclear matrix targeting sequence (NMTS) region; the sequence is YYANVSAAKCQEFGRWYKHFKKTKDMMVEMDSLSELSQQGANHVNFGQQPVPGNT. Positions 224–278 match the Nuclear matrix targeting sequence (NMTS) motif; the sequence is YYANVSAAKCQEFGRWYKHFKKTKDMMVEMDSLSELSQQGANHVNFGQQPVPGNT. Positions 266–296 are enriched in polar residues; it reads HVNFGQQPVPGNTAEQPPSPAQLSHGSQPSV. Positions 266 to 307 are disordered; sequence HVNFGQQPVPGNTAEQPPSPAQLSHGSQPSVRTPLPNLHPGL. The CUT 1 DNA-binding region spans 361 to 448; it reads LEQQVSTNTE…ERDRIYQDER (88 aa). DNA is bound by residues glutamine 390, 400-410, and asparagine 425; that span reads RTQGLLSEILR. Positions 450–474 are disordered; sequence RSLNAASAMGPAPLLSTPPSRPPQV. Positions 484-571 form a DNA-binding region, CUT 2; it reads NGKPENNTMN…ERDAIYEQES (88 aa). The interval 591–650 is disordered; the sequence is QIQQQQQQQQQQQQQQQPPPPPPQPQPQPQAGPRLPPRQPTVASSAESDEENRQKTRPRT. A compositionally biased stretch (low complexity) spans 593–606; that stretch reads QQQQQQQQQQQQQQ. Over residues 607-629 the composition is skewed to pro residues; sequence QPPPPPPQPQPQPQAGPRLPPRQ. Serine 638 bears the Phosphoserine mark. A DNA-binding region (homeobox) is located at residues 646 to 705; that stretch reads TRPRTKISVEALGILQSFIQDVGLYPDEEAIQTLSAQLDLPKYTIIKFFQNQRYYLKHHG. A Glycyl lysine isopeptide (Lys-Gly) (interchain with G-Cter in SUMO) cross-link involves residue lysine 745.

This sequence belongs to the CUT homeobox family. In terms of assembly, interacts with PCAF. Interacts with sumoylated PML and HDAC1 Tat via the CMP domain. Also interacts with DYNLT3 and POLR2J2. Binds to EP300. Homodimer. Part of the nuclear protein complex gamma-globin promoter and enhancer binding factor (gamma-PE) composed at least of SATB1 and HOXB2. Interaction with CtBP1 when not acetylated stabilizes attachment to DNA and promotes transcription repression. Interacts with CUX1 (via DNA-binding domains); the interaction inhibits the attachment of both proteins to DNA. Sumoylated. Sumoylation promotes cleavage by caspases. Post-translationally, phosphorylated by PKC. Acetylated by PCAF. Phosphorylated form interacts with HDAC1, but unphosphorylated form interacts with PCAF. DNA binding properties are activated by phosphorylation and inactivated by acetylation. In opposition, gene expression is down-regulated by phosphorylation but up-regulated by acetylation. In terms of processing, cleaved at Asp-254 by caspase-3 and caspase-6 during T-cell apoptosis in thymus and during B-cell stimulation. The cleaved forms cannot dimerize and lose transcription regulation function because of impaired DNA and chromatin association. In terms of tissue distribution, expressed in the subventricular zone, rostral migratory stream and in the olfactory bulb (at protein level). Mainly expressed in thymus, spleen, and lymph nodes with a lower level observed in the brain.

Its subcellular location is the nucleus. It localises to the PML body. Functionally, required for the switching of fetal globin species, and beta- and gamma-globin genes regulation during erythroid differentiation. Plays a role in chromatin organization and nuclear architecture during apoptosis. Crucial silencing factor contributing to the initiation of X inactivation mediated by Xist RNA that occurs during embryogenesis and in lymphoma. Binds to DNA at special AT-rich sequences, the consensus SATB1-binding sequence (CSBS), at nuclear matrix- or scaffold-associated regions. Thought to recognize the sugar-phosphate structure of double-stranded DNA. Transcriptional repressor controlling nuclear and viral gene expression in a phosphorylated and acetylated status-dependent manner, by binding to matrix attachment regions (MARs) of DNA and inducing a local chromatin-loop remodeling. Acts as a docking site for several chromatin remodeling enzymes and also by recruiting corepressors (HDACs) or coactivators (HATs) directly to promoters and enhancers. Modulates genes that are essential in the maturation of the immune T-cell CD8SP from thymocytes. Promotes neuronal differentiation of neural stem/progenitor cells in the adult subventricular zone, possibly by positively regulating the expression of NEUROD1. This is DNA-binding protein SATB1 (Satb1) from Mus musculus (Mouse).